The following is a 775-amino-acid chain: Dipeptidyl peptidase 4 (775 aa).

A signal peptide spans 1–15 (MKLLSLLMLAGIAQA). Residues N81, N111, N170, and N219 are each glycosylated (N-linked (GlcNAc...) asparagine). Residues S613, D690, and H725 each act as charge relay system in the active site.

This sequence belongs to the peptidase S9B family.

It is found in the secreted. It catalyses the reaction Release of an N-terminal dipeptide, Xaa-Yaa-|-Zaa-, from a polypeptide, preferentially when Yaa is Pro, provided Zaa is neither Pro nor hydroxyproline.. In terms of biological role, extracellular dipeptidyl-peptidase which removes N-terminal dipeptides sequentially from polypeptides having unsubstituted N-termini provided that the penultimate residue is proline. Contributes to pathogenicity. The sequence is that of Dipeptidyl peptidase 4 (DPP4) from Trichophyton tonsurans (Scalp ringworm fungus).